A 697-amino-acid polypeptide reads, in one-letter code: Putative ATP-dependent RNA helicase an3 (697 aa).

The disordered stretch occupies residues 27–189; that stretch reads ESGVAGTKGR…PLAPNDRVEQ (163 aa). 3 stretches are compositionally biased toward basic and acidic residues: residues 89–111, 135–144, and 151–170; these read GRSDRGFYDRENSGWNSGRDKDA, RRTDDRRQDG, and RSDKSGFGRFDRGNSRWSDD. Positions 221 to 249 match the Q motif motif; the sequence is ESFHDVTMGEIIMGNIQLTRYTRPTPVQK. Residues 241–248 and 265–272 each bind ATP; these read YTRPTPVQ and AQTGSGKT. Positions 252 to 444 constitute a Helicase ATP-binding domain; sequence IPIIIEKRDL…RDFLDEYIFL (193 aa). Residues 388–391 carry the DEAD box motif; it reads DEAD. The Helicase C-terminal domain occupies 455-616; the sequence is NITQKVVWVE…EVPSWLENMA (162 aa). Residues 619–666 form a disordered region; sequence QHHKSSSRGRSKSRFSGGFGAKDYRQSSGAGSSFGSSRGGRSSGHGGS. The segment covering 622–631 has biased composition (basic residues); sequence KSSSRGRSKS. Residues 645-654 show a composition bias toward low complexity; the sequence is SSGAGSSFGS. Positions 655–666 are enriched in gly residues; the sequence is SRGGRSSGHGGS.

This sequence belongs to the DEAD box helicase family. DDX3/DED1 subfamily.

The protein resides in the cell membrane. It localises to the nucleus. The protein localises to the cytoplasm. Its subcellular location is the stress granule. It is found in the inflammasome. The protein resides in the cell projection. It localises to the lamellipodium. The enzyme catalyses ATP + H2O = ADP + phosphate + H(+). In terms of biological role, multifunctional ATP-dependent RNA helicase. The ATPase activity can be stimulated by various ribo-and deoxynucleic acids indicative for a relaxed substrate specificity. In vitro can unwind partially double-stranded DNA with a preference for 5'-single-stranded DNA overhangs. Involved in many cellular processes, which do not necessarily require its ATPase/helicase catalytic activities. Involved in the regulation of transcription and translation initiation. Involved in innate immunity. Involved in both stress and inflammatory responses. May negatively regulate extrinsic apoptotic signaling pathway via death domain receptors. May be involved in mitotic chromosome segregation. Required for canonical Wnt signaling involved in anteroposterior neural patterning. This Xenopus laevis (African clawed frog) protein is Putative ATP-dependent RNA helicase an3 (an3).